Consider the following 502-residue polypeptide: Glycerate kinase (502 aa).

This sequence belongs to the glycerate kinase type-2 family.

Its subcellular location is the cytoplasm. It catalyses the reaction (R)-glycerate + ATP = (2R)-3-phosphoglycerate + ADP + H(+). This chain is Glycerate kinase (glyctk), found in Danio rerio (Zebrafish).